The chain runs to 575 residues: Guanine nucleotide-binding protein-like 3-like protein (575 aa).

Residues 1–30 show a composition bias toward basic residues; sequence MMKLRHKNKKPGKGSKGCKKPAKQNGKKAA. Residues 1–75 are disordered; the sequence is MMKLRHKNKK…AAREQERHRR (75 aa). The segment at 9 to 28 is required for nucleolar localization; it reads KKPGKGSKGCKKPAKQNGKK. The segment covering 42 to 72 has biased composition (basic and acidic residues); the sequence is SNDHASREAELKKKRVGEMREKQQAAREQER. The stretch at 51 to 79 forms a coiled coil; the sequence is ELKKKRVGEMREKQQAAREQERHRRRTIE. The CP-type G domain occupies 118–303; it reads YKEFHKVVEY…LLDAPGIVPG (186 aa). GTP contacts are provided by residues 166–169, 252–259, and 296–299; these read NKID, GLPNVGKS, and DAPG. Lys470 is covalently cross-linked (Glycyl lysine isopeptide (Lys-Gly) (interchain with G-Cter in SUMO1)).

The protein belongs to the TRAFAC class YlqF/YawG GTPase family. As to quaternary structure, interacts with MDM2; this interaction, which occurs in the nucleoplasm, stabilizes MDM2. Indirectly interacts with TP53, via MDM2-binding. Interacts with TERF1; this interaction probably occurs in the nucleoplasm and is increased during mitosis, when the nucleolus is disassembled. This binding may promote TERF1 homodimerization. Interacts with TERT.

It localises to the nucleus. Its subcellular location is the nucleolus. Its function is as follows. Stabilizes TERF1 telomeric association by preventing TERF1 recruitment by PML. Stabilizes TERF1 protein by preventing its ubiquitination and hence proteasomal degradation. Does so by interfering with TERF1-binding to FBXO4 E3 ubiquitin-protein ligase. Required for cell proliferation. By stabilizing TRF1 protein during mitosis, promotes metaphase-to-anaphase transition. Stabilizes MDM2 protein by preventing its ubiquitination, and hence proteasomal degradation. By acting on MDM2, may affect TP53 activity. Required for normal processing of ribosomal pre-rRNA. Binds GTP. The chain is Guanine nucleotide-binding protein-like 3-like protein (GNL3L) from Bos taurus (Bovine).